The chain runs to 84 residues: Large ribosomal subunit protein bL27 (84 aa).

Residues 1-29 (MAHKKGGGSTKNGRDSNPKYLGIKASGGS) are disordered.

It belongs to the bacterial ribosomal protein bL27 family.

The sequence is that of Large ribosomal subunit protein bL27 from Chlorobium phaeobacteroides (strain BS1).